The following is a 317-amino-acid chain: Protein-methionine-sulfoxide reductase catalytic subunit MsrP (317 aa).

The segment at residues 1-40 (MNKFTKTDVTPEKLFIQRRKIIQGMSVLSAAAAFPNLAAA) is a signal peptide (tat-type signal). Mo-molybdopterin contacts are provided by residues Asn-72, 75 to 76 (YE), Cys-129, Thr-164, Asn-216, Arg-221, and 232 to 234 (SIK).

This sequence belongs to the MsrP family. Heterodimer of a catalytic subunit (MsrP) and a heme-binding subunit (MsrQ). Mo-molybdopterin serves as cofactor. Predicted to be exported by the Tat system. The position of the signal peptide cleavage has not been experimentally proven.

Its subcellular location is the periplasm. It carries out the reaction L-methionyl-[protein] + a quinone + H2O = L-methionyl-(S)-S-oxide-[protein] + a quinol. The catalysed reaction is L-methionyl-[protein] + a quinone + H2O = L-methionyl-(R)-S-oxide-[protein] + a quinol. In terms of biological role, part of the MsrPQ system that repairs oxidized periplasmic proteins containing methionine sulfoxide residues (Met-O), using respiratory chain electrons. Thus protects these proteins from oxidative-stress damage caused by reactive species of oxygen and chlorine generated by the host defense mechanisms. MsrPQ is essential for the maintenance of envelope integrity under bleach stress, rescuing a wide series of structurally unrelated periplasmic proteins from methionine oxidation. The catalytic subunit MsrP is non-stereospecific, being able to reduce both (R-) and (S-) diastereoisomers of methionine sulfoxide. The chain is Protein-methionine-sulfoxide reductase catalytic subunit MsrP from Actinobacillus succinogenes (strain ATCC 55618 / DSM 22257 / CCUG 43843 / 130Z).